Consider the following 309-residue polypeptide: Protoheme IX farnesyltransferase 2 (309 aa).

8 helical membrane-spanning segments follow: residues 35-55 (FKVV…APDV), 59-79 (MGVQ…AAVI), 107-127 (AHAL…LMLW), 131-151 (LTAI…TSFL), 159-179 (IVIG…SETG), 186-206 (WLLV…LAIA), 238-258 (LLAI…IYLI), and 289-309 (FSII…WLLL).

It belongs to the UbiA prenyltransferase family. Protoheme IX farnesyltransferase subfamily.

The protein resides in the cell inner membrane. The catalysed reaction is heme b + (2E,6E)-farnesyl diphosphate + H2O = Fe(II)-heme o + diphosphate. Its pathway is porphyrin-containing compound metabolism; heme O biosynthesis; heme O from protoheme: step 1/1. Converts heme B (protoheme IX) to heme O by substitution of the vinyl group on carbon 2 of heme B porphyrin ring with a hydroxyethyl farnesyl side group. This chain is Protoheme IX farnesyltransferase 2, found in Pseudoalteromonas translucida (strain TAC 125).